A 28-amino-acid polypeptide reads, in one-letter code: leu operon leader peptide (28 aa).

Functionally, involved in control of the biosynthesis of leucine. The polypeptide is leu operon leader peptide (leuL) (Salmonella typhimurium (strain LT2 / SGSC1412 / ATCC 700720)).